Consider the following 250-residue polypeptide: Glycerol uptake facilitator protein-like 5 (250 aa).

Helical transmembrane passes span 12–32 (EFFGTLILVLLGNGAVANAFL) and 46–66 (GGWLLVASGYGLGVMLPAMMF). An NPA 1 motif is present at residues 75–77 (NPA). A run of 3 helical transmembrane segments spans residues 85 to 105 (IGIFPWAHVAPYLIWQFLGAI), 142 to 162 (LNGFVTEMVGTAVLIFGAMGL), and 172 to 192 (IDIANIGVGLLIAAMVISLGG). An NPA 2 motif is present at residues 199–201 (NPA). The helical transmembrane segment at 230–250 (VVAPIVGAVIGIWIYKIFFGL) threads the bilayer.

Belongs to the MIP/aquaporin (TC 1.A.8) family.

The protein resides in the cell membrane. In terms of biological role, probable transporter that facilitates the transmembrane diffusion of an unknown substrate. Is not permeable to water, dihydroxyacetone, glycerol, urea, H(2)O(2) and D/L-lactic acid. The protein is Glycerol uptake facilitator protein-like 5 of Lactiplantibacillus plantarum (strain ATCC BAA-793 / NCIMB 8826 / WCFS1) (Lactobacillus plantarum).